A 186-amino-acid polypeptide reads, in one-letter code: Elongation factor P (186 aa).

The protein belongs to the elongation factor P family.

It localises to the cytoplasm. The protein operates within protein biosynthesis; polypeptide chain elongation. Its function is as follows. Involved in peptide bond synthesis. Stimulates efficient translation and peptide-bond synthesis on native or reconstituted 70S ribosomes in vitro. Probably functions indirectly by altering the affinity of the ribosome for aminoacyl-tRNA, thus increasing their reactivity as acceptors for peptidyl transferase. This chain is Elongation factor P, found in Pelagibacter ubique (strain HTCC1062).